The primary structure comprises 389 residues: Exodeoxyribonuclease 7 large subunit (389 aa).

The protein belongs to the XseA family. In terms of assembly, heterooligomer composed of large and small subunits.

The protein resides in the cytoplasm. It catalyses the reaction Exonucleolytic cleavage in either 5'- to 3'- or 3'- to 5'-direction to yield nucleoside 5'-phosphates.. Its function is as follows. Bidirectionally degrades single-stranded DNA into large acid-insoluble oligonucleotides, which are then degraded further into small acid-soluble oligonucleotides. This chain is Exodeoxyribonuclease 7 large subunit, found in Pseudothermotoga lettingae (strain ATCC BAA-301 / DSM 14385 / NBRC 107922 / TMO) (Thermotoga lettingae).